Consider the following 283-residue polypeptide: Urease accessory protein UreD (283 aa).

The tract at residues M1 to Q20 is disordered.

Belongs to the UreD family. As to quaternary structure, ureD, UreF and UreG form a complex that acts as a GTP-hydrolysis-dependent molecular chaperone, activating the urease apoprotein by helping to assemble the nickel containing metallocenter of UreC. The UreE protein probably delivers the nickel.

The protein resides in the cytoplasm. In terms of biological role, required for maturation of urease via the functional incorporation of the urease nickel metallocenter. The polypeptide is Urease accessory protein UreD (Corynebacterium glutamicum (strain R)).